Reading from the N-terminus, the 134-residue chain is Transcription antitermination protein NusB (134 aa).

It belongs to the NusB family.

Involved in transcription antitermination. Required for transcription of ribosomal RNA (rRNA) genes. Binds specifically to the boxA antiterminator sequence of the ribosomal RNA (rrn) operons. This Shewanella sediminis (strain HAW-EB3) protein is Transcription antitermination protein NusB.